The sequence spans 289 residues: Inorganic pyrophosphatase (289 aa).

Residue serine 2 is modified to N-acetylserine. Lysine 57 is subject to N6-acetyllysine. Mg(2+) is bound by residues aspartate 116, aspartate 121, and aspartate 153. Phosphoserine is present on serine 250.

It belongs to the PPase family. Homodimer. The cofactor is Mg(2+). In terms of processing, the N-terminus is blocked. Highest levels are found in retinal rod outer segments.

It localises to the cytoplasm. It carries out the reaction diphosphate + H2O = 2 phosphate + H(+). The polypeptide is Inorganic pyrophosphatase (PPA1) (Bos taurus (Bovine)).